The sequence spans 99 residues: Co-chaperonin GroES (99 aa).

This sequence belongs to the GroES chaperonin family. As to quaternary structure, heptamer of 7 subunits arranged in a ring. Interacts with the chaperonin GroEL.

It is found in the cytoplasm. Its function is as follows. Together with the chaperonin GroEL, plays an essential role in assisting protein folding. The GroEL-GroES system forms a nano-cage that allows encapsulation of the non-native substrate proteins and provides a physical environment optimized to promote and accelerate protein folding. GroES binds to the apical surface of the GroEL ring, thereby capping the opening of the GroEL channel. This is Co-chaperonin GroES from Rhodococcus erythropolis (strain PR4 / NBRC 100887).